The chain runs to 597 residues: Elongation factor 4 (597 aa).

A tr-type G domain is found at 2–184 (QHIRNFSIIA…TIVARVPAPQ (183 aa)). GTP-binding positions include 14-19 (DHGKST) and 131-134 (NKMD).

The protein belongs to the TRAFAC class translation factor GTPase superfamily. Classic translation factor GTPase family. LepA subfamily.

It localises to the cell inner membrane. It catalyses the reaction GTP + H2O = GDP + phosphate + H(+). Functionally, required for accurate and efficient protein synthesis under certain stress conditions. May act as a fidelity factor of the translation reaction, by catalyzing a one-codon backward translocation of tRNAs on improperly translocated ribosomes. Back-translocation proceeds from a post-translocation (POST) complex to a pre-translocation (PRE) complex, thus giving elongation factor G a second chance to translocate the tRNAs correctly. Binds to ribosomes in a GTP-dependent manner. The polypeptide is Elongation factor 4 (Bordetella petrii (strain ATCC BAA-461 / DSM 12804 / CCUG 43448)).